The chain runs to 238 residues: Pyridoxine 5'-phosphate synthase (238 aa).

Asn-7 and Arg-18 together coordinate 3-amino-2-oxopropyl phosphate. Residue His-43 is the Proton acceptor of the active site. Arg-45 and His-50 together coordinate 1-deoxy-D-xylulose 5-phosphate. Glu-70 (proton acceptor) is an active-site residue. Thr-100 lines the 1-deoxy-D-xylulose 5-phosphate pocket. The active-site Proton donor is His-190. 3-amino-2-oxopropyl phosphate is bound by residues Asp-191 and 213 to 214 (GH).

It belongs to the PNP synthase family. In terms of assembly, homooctamer; tetramer of dimers.

The protein resides in the cytoplasm. The enzyme catalyses 3-amino-2-oxopropyl phosphate + 1-deoxy-D-xylulose 5-phosphate = pyridoxine 5'-phosphate + phosphate + 2 H2O + H(+). It participates in cofactor biosynthesis; pyridoxine 5'-phosphate biosynthesis; pyridoxine 5'-phosphate from D-erythrose 4-phosphate: step 5/5. Its function is as follows. Catalyzes the complicated ring closure reaction between the two acyclic compounds 1-deoxy-D-xylulose-5-phosphate (DXP) and 3-amino-2-oxopropyl phosphate (1-amino-acetone-3-phosphate or AAP) to form pyridoxine 5'-phosphate (PNP) and inorganic phosphate. The sequence is that of Pyridoxine 5'-phosphate synthase from Porphyromonas gingivalis (strain ATCC 33277 / DSM 20709 / CIP 103683 / JCM 12257 / NCTC 11834 / 2561).